Here is a 130-residue protein sequence, read N- to C-terminus: UPF0251 protein Mevan_1492 (130 aa).

This sequence belongs to the UPF0251 family.

In Methanococcus vannielii (strain ATCC 35089 / DSM 1224 / JCM 13029 / OCM 148 / SB), this protein is UPF0251 protein Mevan_1492.